Consider the following 185-residue polypeptide: Large ribosomal subunit protein uL5m (185 aa).

Belongs to the universal ribosomal protein uL5 family. Component of the mitochondrial ribosome large subunit.

It is found in the mitochondrion. This is Large ribosomal subunit protein uL5m (RPL5) from Arabidopsis thaliana (Mouse-ear cress).